A 354-amino-acid polypeptide reads, in one-letter code: Cellular communication network factor 6 (354 aa).

The first 23 residues, 1-23 (MRRLLFCTLLMTGLTQLCCRTQG), serve as a signal peptide directing secretion. The 74-residue stretch at 44–117 (RTEVCRWPCR…RYETGVCAYL (74 aa)) folds into the IGFBP N-terminal domain. 13 disulfides stabilise this stretch: cysteine 48–cysteine 72, cysteine 52–cysteine 74, cysteine 54–cysteine 75, cysteine 61–cysteine 78, cysteine 86–cysteine 100, cysteine 92–cysteine 114, cysteine 209–cysteine 238, cysteine 219–cysteine 223, cysteine 247–cysteine 252, cysteine 268–cysteine 305, cysteine 285–cysteine 319, cysteine 296–cysteine 335, and cysteine 299–cysteine 337. A TSP type-1 domain is found at 208–253 (KCLVQATKWTPCSRTCGMGISNRVTNDNANCEMRKERRLCYIQPCS). One can recognise a CTCK domain in the interval 268–342 (CQPTFQLPKA…TSCVCQRDCR (75 aa)). Asparagine 308 is a glycosylation site (N-linked (GlcNAc...) asparagine).

This sequence belongs to the CCN family.

It localises to the secreted. It is found in the mitochondrion. Its function is as follows. Plays a role in mitochondrial electron transport and mitochondrial respiration. This is Cellular communication network factor 6 from Mus musculus (Mouse).